A 126-amino-acid polypeptide reads, in one-letter code: Holo-[acyl-carrier-protein] synthase (126 aa).

Mg(2+)-binding residues include aspartate 9 and glutamate 57.

Belongs to the P-Pant transferase superfamily. AcpS family. Mg(2+) serves as cofactor.

It localises to the cytoplasm. It catalyses the reaction apo-[ACP] + CoA = holo-[ACP] + adenosine 3',5'-bisphosphate + H(+). In terms of biological role, transfers the 4'-phosphopantetheine moiety from coenzyme A to a Ser of acyl-carrier-protein. In Idiomarina loihiensis (strain ATCC BAA-735 / DSM 15497 / L2-TR), this protein is Holo-[acyl-carrier-protein] synthase.